Reading from the N-terminus, the 317-residue chain is tRNA(Met) cytidine acetate ligase (317 aa).

ATP contacts are provided by residues 6–19 (IAEYNPFHNGHIYQ), Gly-100, Asn-157, and Arg-182.

The protein belongs to the TmcAL family.

The protein resides in the cytoplasm. The enzyme catalyses cytidine(34) in elongator tRNA(Met) + acetate + ATP = N(4)-acetylcytidine(34) in elongator tRNA(Met) + AMP + diphosphate. Catalyzes the formation of N(4)-acetylcytidine (ac(4)C) at the wobble position of elongator tRNA(Met), using acetate and ATP as substrates. First activates an acetate ion to form acetyladenylate (Ac-AMP) and then transfers the acetyl group to tRNA to form ac(4)C34. This chain is tRNA(Met) cytidine acetate ligase, found in Mesomycoplasma hyopneumoniae (strain 232) (Mycoplasma hyopneumoniae).